An 81-amino-acid chain; its full sequence is MQDGIHPNYQETSVTCGCGNTFTTRSTRPELKIDICSECHPFYTGKLKYVDTAGRIDKFQKKFAAGTYGSLQKKKAKKATK.

C16, C18, C36, and C39 together coordinate Zn(2+).

Belongs to the bacterial ribosomal protein bL31 family. Type A subfamily. Part of the 50S ribosomal subunit. Zn(2+) serves as cofactor.

Functionally, binds the 23S rRNA. The chain is Large ribosomal subunit protein bL31 from Rhodopirellula baltica (strain DSM 10527 / NCIMB 13988 / SH1).